Reading from the N-terminus, the 535-residue chain is UDP-glucuronosyltransferase 1A1 (535 aa).

Positions 1 to 29 (MTVVCWSSRLLLLLPYLLLCVFGPSASHA) are cleaved as a signal peptide. Residues Asn-89, Asn-297, and Asn-435 are each glycosylated (N-linked (GlcNAc...) asparagine). A helical transmembrane segment spans residues 493 to 509 (VIGFLLAIVLTVVFIVF).

The protein belongs to the UDP-glycosyltransferase family. In terms of assembly, homodimers. Homooligomer. Interacts with UGT1A3, UGT1A4, UGT1A6, UGT1A7, UGT1A8, UGT1A9 and UGT1A10 to form heterodimers. Highly expressed in liver and at lower levels in colon, kidney, stomach and intestine.

It is found in the endoplasmic reticulum membrane. It catalyses the reaction glucuronate acceptor + UDP-alpha-D-glucuronate = acceptor beta-D-glucuronoside + UDP + H(+). It carries out the reaction 17beta-estradiol + UDP-alpha-D-glucuronate = 17beta-estradiol 3-O-(beta-D-glucuronate) + UDP + H(+). The catalysed reaction is 2-hydroxyestrone + UDP-alpha-D-glucuronate = 2-hydroxyestrone 3-O-(beta-D-glucuronate) + UDP + H(+). The enzyme catalyses 2-hydroxy-17beta-estradiol + UDP-alpha-D-glucuronate = 2-hydroxy-17beta-estradiol 3-O-(beta-D-glucuronate) + UDP + H(+). It catalyses the reaction 2-methoxy-17beta-estradiol + UDP-alpha-D-glucuronate = 2-methoxy-17beta-estradiol 3-O-(beta-D-glucuronate) + UDP + H(+). It carries out the reaction 17alpha-estradiol + UDP-alpha-D-glucuronate = 17alpha-estradiol 3-O-(beta-D-glucuronate) + UDP + H(+). The catalysed reaction is 16beta,17beta-estriol + UDP-alpha-D-glucuronate = 16beta,17beta-estriol 16-O-(beta-D-glucuronate) + UDP + H(+). The enzyme catalyses losartan + UDP-alpha-D-glucuronate = losartan-2-N-beta-D-glucuronide + UDP. It catalyses the reaction prunetin + UDP-alpha-D-glucuronate = prunetin-4'-O-beta-D-glucuronide + UDP. It carries out the reaction SN-38 + UDP-alpha-D-glucuronate = SN-38 O-beta-D-glucuronide + UDP + H(+). The catalysed reaction is (4Z,15Z)-bilirubin IXalpha + UDP-alpha-D-glucuronate = (4Z,15Z)-bilirubin IXalpha C12-beta-D-glucuronoside + UDP. The enzyme catalyses (4Z,15Z)-bilirubin IXalpha + UDP-alpha-D-glucuronate = (4Z,15Z)-bilirubin IXalpha C8-beta-D-glucuronoside + UDP. It catalyses the reaction (4Z,15Z)-bilirubin IXalpha C8-beta-D-glucuronoside + UDP-alpha-D-glucuronate = (4Z,15Z)-bilirubin IXalpha C8,C12-beta-D-bisglucuronoside + UDP. It carries out the reaction (4Z,15Z)-bilirubin IXalpha C12-beta-D-glucuronoside + UDP-alpha-D-glucuronate = (4Z,15Z)-bilirubin IXalpha C8,C12-beta-D-bisglucuronoside + UDP. The catalysed reaction is 8-iso-prostaglandin F2alpha + UDP-alpha-D-glucuronate = 8-iso-prostaglandin F2alpha-glucuronide + UDP + H(+). The enzyme catalyses (5Z,8Z,11Z,14Z)-eicosatetraenoate + UDP-alpha-D-glucuronate = O-[(5Z),(8Z),(11Z),(14Z)-eicosatetraenoyl]-beta-D-glucuronate + UDP. It catalyses the reaction 15-hydroxy-(5Z,8Z,11Z,13E)-eicosatetraenoate + UDP-alpha-D-glucuronate = 15-O-(beta-D-glucuronosyl)-(5Z,8Z,11Z,14Z)-eicosatetraenoate + UDP + H(+). It carries out the reaction 20-hydroxy-(5Z,8Z,11Z,14Z)-eicosatetraenoate + UDP-alpha-D-glucuronate = 20-O-(beta-D-glucuronosyl)-(5Z,8Z,11Z,14Z)-eicosatetraenoate + UDP + H(+). The catalysed reaction is prostaglandin B1 + UDP-alpha-D-glucuronate = 15-O-(beta-D-glucuronosyl)-prostaglandin B1 + UDP + H(+). The enzyme catalyses (E)-ferulate + UDP-alpha-D-glucuronate = (E)-4-O-(beta-D-glucuronosyl)-ferulate + UDP + H(+). It catalyses the reaction (E)-ferulate + UDP-alpha-D-glucuronate = (E)-ferulic acid beta-D-glucuronate ester + UDP. Functionally, UDP-glucuronosyltransferase (UGT) that catalyzes phase II biotransformation reactions in which lipophilic substrates are conjugated with glucuronic acid to increase the metabolite's water solubility, thereby facilitating excretion into either the urine or bile. Essential for the elimination and detoxification of drugs, xenobiotics and endogenous compounds. Catalyzes the glucuronidation of endogenous estrogen hormones such as estradiol, estrone and estriol. Involved in the glucuronidation of bilirubin, a degradation product occurring in the normal catabolic pathway that breaks down heme in vertebrates. Involved in the glucuronidation of arachidonic acid (AA) and AA-derived eicosanoids including 15-HETE, 20-HETE, PGB1 and F2-isoprostane (8-iso-PGF2alpha). Involved in the glucuronidation of the phytochemical ferulic acid at the phenolic or the carboxylic acid group. Also catalyzes the glucuronidation the isoflavones genistein, daidzein, glycitein, formononetin, biochanin A and prunetin, which are phytoestrogens with anticancer and cardiovascular properties. Involved in the glucuronidation of the AGTR1 angiotensin receptor antagonist losartan, a drug which can inhibit the effect of angiotensin II. Involved in the biotransformation of 7-ethyl-10-hydroxycamptothecin (SN-38), the pharmacologically active metabolite of the anticancer drug irinotecan. In Mus musculus (Mouse), this protein is UDP-glucuronosyltransferase 1A1.